We begin with the raw amino-acid sequence, 522 residues long: BTB/POZ domain-containing protein 3 (522 aa).

One can recognise a BTB domain in the interval 120 to 190 (ADVHFVVGPP…IYCDEIDLAA (71 aa)). Residues 235–300 (FEEPDLTQRC…NWAEVECQRQ (66 aa)) form the BACK domain.

Strongly expressed in the primary visual cortex.

The protein localises to the cytoplasm. It localises to the cytosol. Its subcellular location is the nucleus. Its function is as follows. Acts as a key regulator of dendritic field orientation during development of sensory cortex. Also directs dendrites toward active axon terminals when ectopically expressed. The sequence is that of BTB/POZ domain-containing protein 3 (BTBD3) from Callithrix jacchus (White-tufted-ear marmoset).